The following is an 88-amino-acid chain: Small ribosomal subunit protein uS15c (88 aa).

It belongs to the universal ribosomal protein uS15 family. In terms of assembly, part of the 30S ribosomal subunit.

The protein localises to the plastid. It is found in the chloroplast. This chain is Small ribosomal subunit protein uS15c (rps15), found in Draba nemorosa (Woodland whitlowgrass).